The primary structure comprises 552 residues: L-ascorbate oxidase (552 aa).

Plastocyanin-like domains are found at residues 1–122 (SQIR…LIVD) and 134–300 (DGEI…NYLP). Intrachain disulfides connect Cys19–Cys201, Cys81–Cys538, and Cys180–Cys193. Residues His60 and His62 each contribute to the Cu cation site. Asn92 carries an N-linked (GlcNAc...) asparagine glycan. 2 residues coordinate Cu cation: His104 and His106. N-linked (GlcNAc...) asparagine glycosylation is found at Asn325 and Asn440. The 180-residue stretch at 344-523 (NRRIFLLNTQ…HMGMGVVFAE (180 aa)) folds into the Plastocyanin-like 3 domain. Cu cation-binding residues include His445, His448, His450, His506, Cys507, His508, His512, and Met517.

It belongs to the multicopper oxidase family. As to quaternary structure, dimer. Cu cation is required as a cofactor.

It is found in the secreted. The catalysed reaction is 4 L-ascorbate + O2 = 4 monodehydro-L-ascorbate radical + 2 H2O. In terms of biological role, may be involved in a redox system involving ascorbic acid. The sequence is that of L-ascorbate oxidase from Cucurbita pepo var. melopepo (Zucchini).